A 520-amino-acid chain; its full sequence is Chaperone Ric-8B (520 aa).

Serine 468 is subject to Phosphoserine. Residue threonine 473 is modified to Phosphothreonine.

It belongs to the synembryn family. In terms of assembly, interacts with GDP-bound G(s) G-alpha proteins GNAL and GNAS. Does not interact with G-alpha proteins when they are in complex with subunits beta and gamma.

It is found in the cytoplasm. Its subcellular location is the cell cortex. Chaperone that specifically binds and folds nascent G(s) G-alpha proteins (GNAS and GNAL) prior to G protein heterotrimer formation, promoting their association with the plasma membrane. Also acts as a guanine nucleotide exchange factor (GEF) for G(s) proteins by stimulating exchange of bound GDP for free GTP. Acts as an important component for odorant signal transduction by mediating GNAL (G(olf)-alpha) folding, thereby promoting-dependent cAMP accumulation in olfactory sensory neurons. The protein is Chaperone Ric-8B (Ric8b) of Rattus norvegicus (Rat).